The chain runs to 66 residues: MAVVVVQEGESFEKALKRFKKICEKEGIITEMKRREFYEKPSVKRKRKQRAARKRLIKALKKKGLL.

This sequence belongs to the bacterial ribosomal protein bS21 family.

This Persephonella marina (strain DSM 14350 / EX-H1) protein is Small ribosomal subunit protein bS21.